The sequence spans 322 residues: tRNA-dihydrouridine(16) synthase (322 aa).

Residues 8–10 (PME) and Gln-69 each bind FMN. Cys-99 acts as the Proton donor in catalysis. FMN is bound by residues Lys-140, 200-202 (NGD), and 224-225 (GR).

It belongs to the Dus family. DusC subfamily. Requires FMN as cofactor.

It catalyses the reaction 5,6-dihydrouridine(16) in tRNA + NADP(+) = uridine(16) in tRNA + NADPH + H(+). It carries out the reaction 5,6-dihydrouridine(16) in tRNA + NAD(+) = uridine(16) in tRNA + NADH + H(+). Functionally, catalyzes the synthesis of 5,6-dihydrouridine (D), a modified base found in the D-loop of most tRNAs, via the reduction of the C5-C6 double bond in target uridines. Specifically modifies U16 in tRNAs. The sequence is that of tRNA-dihydrouridine(16) synthase from Cupriavidus necator (strain ATCC 17699 / DSM 428 / KCTC 22496 / NCIMB 10442 / H16 / Stanier 337) (Ralstonia eutropha).